A 468-amino-acid chain; its full sequence is Ribulose bisphosphate carboxylase large chain (468 aa).

Lys-5 is modified (N6,N6,N6-trimethyllysine). Asn-114 and Thr-164 together coordinate substrate. Lys-166 acts as the Proton acceptor in catalysis. A substrate-binding site is contributed by Lys-168. Residues Lys-192, Asp-194, and Glu-195 each contribute to the Mg(2+) site. Lys-192 is modified (N6-carboxylysine). His-285 acts as the Proton acceptor in catalysis. Arg-286, His-318, and Ser-370 together coordinate substrate.

The protein belongs to the RuBisCO large chain family. Type I subfamily. In terms of assembly, heterohexadecamer of 8 large chains and 8 small chains; disulfide-linked. The disulfide link is formed within the large subunit homodimers. Mg(2+) is required as a cofactor. In terms of processing, the disulfide bond which can form in the large chain dimeric partners within the hexadecamer appears to be associated with oxidative stress and protein turnover.

Its subcellular location is the plastid. The protein resides in the chloroplast. It carries out the reaction 2 (2R)-3-phosphoglycerate + 2 H(+) = D-ribulose 1,5-bisphosphate + CO2 + H2O. The enzyme catalyses D-ribulose 1,5-bisphosphate + O2 = 2-phosphoglycolate + (2R)-3-phosphoglycerate + 2 H(+). Functionally, ruBisCO catalyzes two reactions: the carboxylation of D-ribulose 1,5-bisphosphate, the primary event in carbon dioxide fixation, as well as the oxidative fragmentation of the pentose substrate in the photorespiration process. Both reactions occur simultaneously and in competition at the same active site. The protein is Ribulose bisphosphate carboxylase large chain of Anthocercis viscosa (Sticky tailflower).